We begin with the raw amino-acid sequence, 417 residues long: MGLTLTQKILSAKVGREVKPGELIEVDVDMVLGNDVTAPVAIKEFEKIGIDRVFDNTKIALVPDHFVPNKDIKSAEQVNIMRKFAKKHGIVNFFEVGQMGIEHALLPEKGLVLPGDVVIGADSHTCTYGALTCFSTGVGSTDMAAAMATGKAWFKVPEAIKFVLKGNLQKWVSGKDVILYIIGKIGVDGALYKSMEFTGNIKALSMDDRFTIANMAIEAGAKNGIFDFDEITEAYVKGRAKREYKVFERDVDAEYSEVYEISLDEIRPQVAFPHLPENTRNIDEVGKVKIDQVVIGSCTNGRISDMEIAYKILKGKKVHPDVRLLIFPATQEIYLECVKRGYIEEFIKAGAAVSTPTCGPCLGGHMGILAKGERALATTNRNFVGRMGHPESEVYLSSPAVAAASAIAGYIVSPEEV.

Positions 298, 358, and 361 each coordinate [4Fe-4S] cluster.

Belongs to the aconitase/IPM isomerase family. LeuC type 2 subfamily. Heterodimer of LeuC and LeuD. The cofactor is [4Fe-4S] cluster.

It carries out the reaction (2R,3S)-3-isopropylmalate = (2S)-2-isopropylmalate. It participates in amino-acid biosynthesis; L-leucine biosynthesis; L-leucine from 3-methyl-2-oxobutanoate: step 2/4. Catalyzes the isomerization between 2-isopropylmalate and 3-isopropylmalate, via the formation of 2-isopropylmaleate. The polypeptide is 3-isopropylmalate dehydratase large subunit (Thermoanaerobacter pseudethanolicus (strain ATCC 33223 / 39E) (Clostridium thermohydrosulfuricum)).